A 37-amino-acid polypeptide reads, in one-letter code: Large ribosomal subunit protein bL36 (37 aa).

Belongs to the bacterial ribosomal protein bL36 family.

The polypeptide is Large ribosomal subunit protein bL36 (Solibacter usitatus (strain Ellin6076)).